We begin with the raw amino-acid sequence, 114 residues long: Secretoglobin family 2B member 2 (114 aa).

Positions 1–23 are cleaved as a signal peptide; sequence MKGTLLLLALLVTGELGFQRTEA.

This sequence belongs to the secretoglobin family. In terms of tissue distribution, expressed in lacrimal gland.

It is found in the secreted. The chain is Secretoglobin family 2B member 2 (Scgb2b2) from Mus musculus (Mouse).